The chain runs to 155 residues: Ribonuclease H (155 aa).

The region spanning 4–145 (QQKVVEIYTD…ADALARKAIA (142 aa)) is the RNase H type-1 domain. Positions 13, 51, 73, and 137 each coordinate Mg(2+).

This sequence belongs to the RNase H family. Monomer. The cofactor is Mg(2+).

The protein localises to the cytoplasm. The enzyme catalyses Endonucleolytic cleavage to 5'-phosphomonoester.. Functionally, endonuclease that specifically degrades the RNA of RNA-DNA hybrids. The chain is Ribonuclease H from Bartonella tribocorum (strain CIP 105476 / IBS 506).